Here is a 415-residue protein sequence, read N- to C-terminus: Peptide chain release factor subunit 1 (415 aa).

It belongs to the eukaryotic release factor 1 family. As to quaternary structure, heterodimer of two subunits, one of which binds GTP.

It localises to the cytoplasm. Directs the termination of nascent peptide synthesis (translation) in response to the termination codons UAA, UAG and UGA. The chain is Peptide chain release factor subunit 1 from Methanosarcina mazei (strain ATCC BAA-159 / DSM 3647 / Goe1 / Go1 / JCM 11833 / OCM 88) (Methanosarcina frisia).